Here is a 471-residue protein sequence, read N- to C-terminus: Intraflagellar transport protein 46 homolog (471 aa).

2 disordered regions span residues 1–202 and 226–246; these read MSSE…SNMR and SRLE…EDDD. Composition is skewed to acidic residues over residues 89–99 and 231–246; these read SEPQEVIDVND and DSSN…EDDD.

The protein belongs to the IFT46 family. In terms of assembly, component of the IFT complex B composed of at least che-2, che-13, dyf-1, dyf-3, dyf-6, dyf-11, dyf-13, ift-20, ift-74, ift-81, ifta-2, osm-1, osm-5 and osm-6. In terms of tissue distribution, expressed in the hypodermis and sensory neurons including inner labial, PDE, amphid and phasmid neurons.

It is found in the cell projection. It localises to the cilium. The protein resides in the cytoplasm. The protein localises to the cytoskeleton. Its subcellular location is the cilium basal body. It is found in the dendrite. It localises to the perikaryon. Functionally, component of the intraflagellar transport (IFT) complex B required for transport of proteins in the motile cilium. May be required for ciliary entrance and transport of specific ciliary cargo proteins such as che-3 which are related to motility. Required for normal morphology and function of ciliated amphid sensory neurons. In Caenorhabditis elegans, this protein is Intraflagellar transport protein 46 homolog.